A 136-amino-acid chain; its full sequence is Orexigenic neuropeptide QRFP (136 aa).

Positions 1–18 (MVRPYPLIYFLFLPLGAC) are cleaved as a signal peptide. The propeptide occupies 19–90 (FPLLDRREPT…HAGCRFRFGR (72 aa)). The residue at position 91 (Gln91) is a Pyrrolidone carboxylic acid. Phe133 carries the post-translational modification Phenylalanine amide.

It belongs to the RFamide neuropeptide family. As to quaternary structure, ligand for the G-protein coupled receptor QRFPR/GPR103. Expressed widely in the brain with highest expression levels in the cerebellum, medulla, pituitary, retina, vestibular nucleus, and white matter. Also expressed in the bladder, colon, coronary artery, parathyroid gland, prostate, testis, and thyroid.

It localises to the secreted. Its function is as follows. Stimulates feeding behavior, metabolic rate and locomotor activity and increases blood pressure. May have orexigenic activity. May promote aldosterone secretion by the adrenal gland. The chain is Orexigenic neuropeptide QRFP from Homo sapiens (Human).